The sequence spans 216 residues: Chaperone protein TorD (216 aa).

It belongs to the TorD/DmsD family. TorD subfamily.

It is found in the cytoplasm. Its function is as follows. Involved in the biogenesis of TorA. Acts on TorA before the insertion of the molybdenum cofactor and, as a result, probably favors a conformation of the apoenzyme that is competent for acquiring the cofactor. This chain is Chaperone protein TorD, found in Photobacterium profundum (strain SS9).